The chain runs to 377 residues: Succinyl-diaminopimelate desuccinylase (377 aa).

H66 serves as a coordination point for Zn(2+). D68 is an active-site residue. D99 provides a ligand contact to Zn(2+). E133 acts as the Proton acceptor in catalysis. Residues E134, E162, and H348 each contribute to the Zn(2+) site.

Belongs to the peptidase M20A family. DapE subfamily. In terms of assembly, homodimer. It depends on Zn(2+) as a cofactor. Co(2+) serves as cofactor.

It catalyses the reaction N-succinyl-(2S,6S)-2,6-diaminopimelate + H2O = (2S,6S)-2,6-diaminopimelate + succinate. It functions in the pathway amino-acid biosynthesis; L-lysine biosynthesis via DAP pathway; LL-2,6-diaminopimelate from (S)-tetrahydrodipicolinate (succinylase route): step 3/3. Its function is as follows. Catalyzes the hydrolysis of N-succinyl-L,L-diaminopimelic acid (SDAP), forming succinate and LL-2,6-diaminopimelate (DAP), an intermediate involved in the bacterial biosynthesis of lysine and meso-diaminopimelic acid, an essential component of bacterial cell walls. The chain is Succinyl-diaminopimelate desuccinylase from Histophilus somni (strain 2336) (Haemophilus somnus).